A 150-amino-acid chain; its full sequence is Large ribosomal subunit protein uL13 (150 aa).

Positions 129–150 (TEHPHAAQKPQPLQLNPSASAQ) are disordered. The segment covering 139 to 150 (QPLQLNPSASAQ) has biased composition (polar residues).

This sequence belongs to the universal ribosomal protein uL13 family. As to quaternary structure, part of the 50S ribosomal subunit.

This protein is one of the early assembly proteins of the 50S ribosomal subunit, although it is not seen to bind rRNA by itself. It is important during the early stages of 50S assembly. In Synechococcus sp. (strain CC9605), this protein is Large ribosomal subunit protein uL13.